The following is a 233-amino-acid chain: Eukaryotic translation initiation factor 3 subunit G (233 aa).

The RRM domain maps to 152–229 (PSIMVSNLSQ…LVLSLEFAKK (78 aa)).

This sequence belongs to the eIF-3 subunit G family. In terms of assembly, component of the eukaryotic translation initiation factor 3 (eIF-3) complex.

Its subcellular location is the cytoplasm. RNA-binding component of the eukaryotic translation initiation factor 3 (eIF-3) complex, which is involved in protein synthesis of a specialized repertoire of mRNAs and, together with other initiation factors, stimulates binding of mRNA and methionyl-tRNAi to the 40S ribosome. The eIF-3 complex specifically targets and initiates translation of a subset of mRNAs involved in cell proliferation. This subunit can bind 18S rRNA. This chain is Eukaryotic translation initiation factor 3 subunit G (eif3G), found in Dictyostelium discoideum (Social amoeba).